Consider the following 340-residue polypeptide: MSAHPGKPGRYYLISYPRTASNLLLKILALDSQPNFSSGEVDGGYFFMPADDILIEPRIRARSIGDWTADERAQVKESFQACFEAQQQWLEATESQGRSVFVKEHTVFFADPTARSDLQFGPSPTREPAWTVEYAGGSTHSKLNITVLPDEFLLTWLPTFLIRHPALAFPSLYRTVIKREGKESAAADNFASLLTTVEWSRSLYDFYVQNRESLPCSPDQSLEWPMILDADDIIAHPATVALYCNKIGMDPRKLCFHWDQFKSEELSQIEPNQLAMRMSLYQSTGIDTSKSSRGINVDDEASKWRSEFGIAVGDHIEKLVRGAMADYEYLRARRLRADRG.

It functions in the pathway secondary metabolite biosynthesis. Its function is as follows. Sulfotransferase; part of the gene cluster that mediates the biosynthesis of pyrrolopyrazines, secondary metabolites showing insecticidal activity. The role of ppzF within the pathway has still to be determined. The single multifunctional NRPS ppzA is sufficient to produce peramine via condensation of 1-pyrroline-5-carboxylate and arginine, N-methylation of the alpha-amino group of arginine and reduction of the thioester and the cyclization to form an iminium ion resulting in release from the peptide synthetase. Deprotonation of this intermediate and oxidation of the pyrroline ring would give rise to peramine. In Epichloe species that produce only peramine, the peramine synthetase gene is not localized in a gene cluster, in contrast to Metarhizium species that contain additional pyrrolopyrazine biosynthesis genes. The 2-oxoglutarate-Fe(II) type oxidoreductase ppzC hydroxylates peramine to yield the newly identified compound 8-hydroxyperamine whereas ppzD converts L-proline into trans-4-hydroxy-L-proline, a precursor of peramine biosynthesis. The polypeptide is Sulfotransferase ppzF (Metarhizium rileyi (strain RCEF 4871) (Nomuraea rileyi)).